We begin with the raw amino-acid sequence, 21 residues long: S-layer protein 2 (21 aa).

The protein resides in the secreted. Its subcellular location is the cell wall. It localises to the S-layer. Functionally, the S-layer is a paracrystalline mono-layered assembly of proteins which coat the surface of bacteria. The sequence is that of S-layer protein 2 from Bacillus thuringiensis subsp. konkukian.